Consider the following 535-residue polypeptide: Sucrose transport protein SUT5 (535 aa).

The Cytoplasmic segment spans residues 1–53; it reads MEEGRRGDREGKSAAGWTALSTTKTTLEEKRRLQANGSVGGDAGTSGFRRIVR. A helical membrane pass occupies residues 54 to 74; that stretch reads LFFACMVAGGIQYGWALQLSL. The Extracellular portion of the chain corresponds to 75 to 87; that stretch reads LSPYSQTLGISHS. Residues 88-108 traverse the membrane as a helical segment; sequence YVSLTWICGPIAGFVVQPIVG. Residues 109–122 are Cytoplasmic-facing; it reads YYSDRCTMKMGRRR. Residues 123-143 traverse the membrane as a helical segment; the sequence is PFILVGCLIICISVMIIGFSA. The Extracellular segment spans residues 144–163; it reads DIGRHLGDTKEHCSTYTGPR. A helical transmembrane segment spans residues 164–184; the sequence is WSAAMVYIVGFWFLDFANNTV. Over 185–203 the chain is Cytoplasmic; that stretch reads QGPARAMMADLSAGHHGPN. A helical transmembrane segment spans residues 204 to 224; sequence VGQSIFSLWMAIGSVLGYLSG. Residues 225 to 249 are Extracellular-facing; sequence ANGKWHEWFPWLKTAACCDACANLK. A helical membrane pass occupies residues 250-270; that stretch reads GAFFTAVLLIVVSMTVTMYLA. The Cytoplasmic segment spans residues 271-302; the sequence is DEMPLDKQDVDTSGGGGCAVFVDLFKSLRNLP. The helical transmembrane segment at 303–323 threads the bilayer; that stretch reads PAMFKVLAVTAVTWLSWFPFI. Residues 324 to 354 are Extracellular-facing; that stretch reads QYNTDWMGREIYHGEPQGTAAKADVYDAGVR. Residues 355–375 form a helical membrane-spanning segment; the sequence is EGAMGLLFCSVALGVTSFVIP. Residues 376 to 384 lie on the Cytoplasmic side of the membrane; the sequence is KLCRRLTSK. A helical transmembrane segment spans residues 385–405; the sequence is VVWSISNFLVFALMAVMVAVG. The Extracellular portion of the chain corresponds to 406–429; it reads MVSMRGYRPSLAAGLTGPDPTLKA. A helical transmembrane segment spans residues 430 to 450; sequence VALVVFALIGIPQAVLFSVPW. Over 451–465 the chain is Cytoplasmic; that stretch reads AVASEVTAEEGGGQG. Residues 466 to 486 form a helical membrane-spanning segment; it reads LAIGVLNIAIVVPQLVIALTA. Residues 487–498 are Extracellular-facing; the sequence is GPIDGAFNKGNT. Residues 499-519 traverse the membrane as a helical segment; sequence PAFGIGGAFAFICGVLALIWL. Over 520 to 535 the chain is Cytoplasmic; the sequence is PKTRGVSNAAVVAGGH.

It belongs to the glycoside-pentoside-hexuronide (GPH) cation symporter transporter (TC 2.A.2.4) family. Homodimer. In terms of tissue distribution, widely expressed. Highest expression in sink leaves and lowest in germinating seeds.

The protein resides in the cell membrane. It functions in the pathway glycan biosynthesis; sucrose metabolism. Responsible for the transport of sucrose into the cell, with the concomitant uptake of protons (symport system). Can also transport other glucosides such as maltose, arbutin, salicin, helicin, alpha-phenylglucoside and beta-phenylglucoside. The sequence is that of Sucrose transport protein SUT5 (SUT5) from Oryza sativa subsp. japonica (Rice).